A 178-amino-acid chain; its full sequence is Large ribosomal subunit protein uL6 (178 aa).

This sequence belongs to the universal ribosomal protein uL6 family. Part of the 50S ribosomal subunit.

Its function is as follows. This protein binds to the 23S rRNA, and is important in its secondary structure. It is located near the subunit interface in the base of the L7/L12 stalk, and near the tRNA binding site of the peptidyltransferase center. The chain is Large ribosomal subunit protein uL6 from Helicobacter pylori (strain G27).